A 426-amino-acid chain; its full sequence is Phosphomethylpyrimidine synthase (426 aa).

Substrate-binding positions include N65, M94, Y123, H162, 184–186 (SRG), 225–228 (DGLR), and E264. H268 is a binding site for Zn(2+). Substrate is bound at residue Y291. H332 provides a ligand contact to Zn(2+). [4Fe-4S] cluster is bound by residues C409, C412, and C416.

It belongs to the ThiC family. Requires [4Fe-4S] cluster as cofactor.

It carries out the reaction 5-amino-1-(5-phospho-beta-D-ribosyl)imidazole + S-adenosyl-L-methionine = 4-amino-2-methyl-5-(phosphooxymethyl)pyrimidine + CO + 5'-deoxyadenosine + formate + L-methionine + 3 H(+). Its pathway is cofactor biosynthesis; thiamine diphosphate biosynthesis. Catalyzes the synthesis of the hydroxymethylpyrimidine phosphate (HMP-P) moiety of thiamine from aminoimidazole ribotide (AIR) in a radical S-adenosyl-L-methionine (SAM)-dependent reaction. This is Phosphomethylpyrimidine synthase from Thermodesulfovibrio yellowstonii (strain ATCC 51303 / DSM 11347 / YP87).